We begin with the raw amino-acid sequence, 352 residues long: tRNA N6-adenosine threonylcarbamoyltransferase (352 aa).

Fe cation contacts are provided by H115 and H119. Substrate is bound by residues 137 to 141, D170, G183, and N281; that span reads LVSGG. D309 provides a ligand contact to Fe cation.

This sequence belongs to the KAE1 / TsaD family. The cofactor is Fe(2+).

The protein resides in the cytoplasm. The catalysed reaction is L-threonylcarbamoyladenylate + adenosine(37) in tRNA = N(6)-L-threonylcarbamoyladenosine(37) in tRNA + AMP + H(+). Functionally, required for the formation of a threonylcarbamoyl group on adenosine at position 37 (t(6)A37) in tRNAs that read codons beginning with adenine. Is involved in the transfer of the threonylcarbamoyl moiety of threonylcarbamoyl-AMP (TC-AMP) to the N6 group of A37, together with TsaE and TsaB. TsaD likely plays a direct catalytic role in this reaction. The sequence is that of tRNA N6-adenosine threonylcarbamoyltransferase from Methylocapsa acidiphila.